A 420-amino-acid polypeptide reads, in one-letter code: MGSIDDSFSLPAPSDEHGFEALGTQLVEAMSTYAKCLKAENLPPPSLYPMFSASTSVACPEGIEAKRKIVELSQLICAATMDPELNLLISSLQFHFCSSLKVAIDLRIYEYIPVDGTVSLSQLAELAGRIMRVLTNKHVFMQIQPGHYAHTRMSSLLLKTKAKDLLSHRLDDVFRSASREADALAQAGYREPDRRAAKGFNLAFNTDKNFWEYIATDDPKRGARFARAMHAVNINSLDVIPRLYPFDSLATDGSLIVDVGGGQGQVAKRILEYYPNSGLRCIVQDGYVTNGSTAGPAAVEMHRHDFFEAQPIKGAAAYFFRHIFHDWPDNACVTILKQTARAMDKHRSRILICDQVLDDNSPAEASLLYDIDMMSLFGGKERSLAEWKSLIYSAGENLEIVNVLRSPESEAAILDVRLKL.

S-adenosyl-L-methionine is bound at residue D285. The Proton acceptor role is filled by H325.

Belongs to the class I-like SAM-binding methyltransferase superfamily. Cation-independent O-methyltransferase family.

It functions in the pathway secondary metabolite biosynthesis. It participates in alkaloid biosynthesis. Its pathway is mycotoxin biosynthesis. Its function is as follows. O-methyltransferase; part of the gene cluster that mediates the biosynthesis of penigequinolones, potent insecticidal alkaloids that contain a highly modified 10-carbon prenyl group. The first stage is catalyzed by the nonribosomal peptide synthetase penN that condenses anthranilic acid and O-methyl-L-tyrosine to produce 4'-methoxycyclopeptin. 4'-methoxycyclopeptin is then converted to 4'-methoxydehydrocyclopeptin by the ketoglutarate-dependent dioxygenase penM through dehydrogenation to form a double bond between C-alpha and C-beta of the O-methyltyrosine side chain. PenM also converts its first product methoxydehydrocyclopeptin to 4'-methoxycyclopenin. The following conversion of 4'methoxycyclopenin into 4'-methoxyviridicatin is catalyzed by the cyclopenase penL. 4'-methoxyviridicatin is the precursor of quinolone natural products, and is further converted to quinolinone B. The prenyltransferase penI then catalyzes the canonical Friedel-Crafts alkylation of quinolinone B with dimethylallyl cation to yield dimethylallyl quinolone, which is subjected to FAD-dependent dehydrogenation by the FAD-linked oxidoreductase penH to yield conjugated aryl diene. The delta(3') double bond then serves as the site of the second alkylation with DMAPP catalyzed by the prenyltransferase penG to yield a carbenium ion intermediate, which can be attacked by H(2)O to yield a styrenyl quinolone containing a C3'-hydroxyprenyl chain, or undergo cyclization to yield yaequinolones J1 and J2. The conversion of the styrenyl quinolone into the tetrahydrofuran-containing yaequinolone C is performed by the FAD-dependent monooxygenase penE and involves epoxidation of the terminal C7'-C8' olefin, followed by epoxide ring opening initiated by the C3' hydroxyl group. The predicted cysteine hydrolase penJ acts as an epoxide hydrolase that enhances the rate of the 5-exo-tet cyclization step, increasing the yield of yaequinolone C. PenF catalyzes the cationic rearrangement of the epoxide formed by penE (before ring opening to produce yaequinolone C) into yaequinolone D. Finally, the short-chain dehydrogenase/reductase (SDR)-like reductase penD, catalyzes both the dehydration of yaequinolone D and the reduction of the resulting oxonium to yield penigequinolone. This is O-methyltransferase penK from Penicillium thymicola.